Here is a 349-residue protein sequence, read N- to C-terminus: Aspartate-semialdehyde dehydrogenase (349 aa).

Residues 12–15 (TGSV) and 39–40 (NS) contribute to the NADP(+) site. Residue arginine 113 participates in phosphate binding. The active-site Acyl-thioester intermediate is cysteine 148. Glutamine 175 lines the substrate pocket. 178 to 179 (SG) is a binding site for NADP(+). Glutamate 201 contributes to the substrate binding site. A phosphate-binding site is contributed by lysine 204. A substrate-binding site is contributed by arginine 234. Residue histidine 241 is the Proton acceptor of the active site. An NADP(+)-binding site is contributed by 326–327 (NT).

It belongs to the aspartate-semialdehyde dehydrogenase family. Homodimer.

It catalyses the reaction L-aspartate 4-semialdehyde + phosphate + NADP(+) = 4-phospho-L-aspartate + NADPH + H(+). Its pathway is amino-acid biosynthesis; L-lysine biosynthesis via DAP pathway; (S)-tetrahydrodipicolinate from L-aspartate: step 2/4. It functions in the pathway amino-acid biosynthesis; L-methionine biosynthesis via de novo pathway; L-homoserine from L-aspartate: step 2/3. It participates in amino-acid biosynthesis; L-threonine biosynthesis; L-threonine from L-aspartate: step 2/5. Catalyzes the NADPH-dependent formation of L-aspartate-semialdehyde (L-ASA) by the reductive dephosphorylation of L-aspartyl-4-phosphate. The protein is Aspartate-semialdehyde dehydrogenase of Leptospira interrogans serogroup Icterohaemorrhagiae serovar Lai (strain 56601).